Consider the following 59-residue polypeptide: Large ribosomal subunit protein bL32 (59 aa).

The disordered stretch occupies residues 1 to 20 (MAVPRNRHSNARKNIRRSHH).

The protein belongs to the bacterial ribosomal protein bL32 family.

In Chlamydia muridarum (strain MoPn / Nigg), this protein is Large ribosomal subunit protein bL32 (rpmF).